A 535-amino-acid polypeptide reads, in one-letter code: CTP synthase (535 aa).

The interval 1–267 (MTKYIFVTGG…DKLVCDHMKL (267 aa)) is amidoligase domain. Residue serine 13 coordinates CTP. Residue serine 13 participates in UTP binding. ATP is bound at residue 14–19 (SLGKGI). Position 54 (tyrosine 54) interacts with L-glutamine. Aspartate 71 serves as a coordination point for ATP. Mg(2+) is bound by residues aspartate 71 and glutamate 141. Residues 148-150 (DIE), 188-193 (KTKPTQ), and lysine 224 each bind CTP. UTP contacts are provided by residues 188-193 (KTKPTQ) and lysine 224. Residues 292 to 534 (TISLVGKYVE…IGASVQAAEQ (243 aa)) enclose the Glutamine amidotransferase type-1 domain. L-glutamine is bound at residue glycine 354. The active-site Nucleophile; for glutamine hydrolysis is the cysteine 381. Residues 382-385 (LGMQ), glutamate 405, and arginine 462 each bind L-glutamine. Active-site residues include histidine 507 and glutamate 509.

The protein belongs to the CTP synthase family. Homotetramer.

It catalyses the reaction UTP + L-glutamine + ATP + H2O = CTP + L-glutamate + ADP + phosphate + 2 H(+). It carries out the reaction L-glutamine + H2O = L-glutamate + NH4(+). The enzyme catalyses UTP + NH4(+) + ATP = CTP + ADP + phosphate + 2 H(+). The protein operates within pyrimidine metabolism; CTP biosynthesis via de novo pathway; CTP from UDP: step 2/2. Allosterically activated by GTP, when glutamine is the substrate; GTP has no effect on the reaction when ammonia is the substrate. The allosteric effector GTP functions by stabilizing the protein conformation that binds the tetrahedral intermediate(s) formed during glutamine hydrolysis. Inhibited by the product CTP, via allosteric rather than competitive inhibition. Functionally, catalyzes the ATP-dependent amination of UTP to CTP with either L-glutamine or ammonia as the source of nitrogen. Regulates intracellular CTP levels through interactions with the four ribonucleotide triphosphates. The chain is CTP synthase from Bacillus velezensis (strain DSM 23117 / BGSC 10A6 / LMG 26770 / FZB42) (Bacillus amyloliquefaciens subsp. plantarum).